The primary structure comprises 271 residues: Extracellular metalloprotease ARB_05317 (271 aa).

The signal sequence occupies residues methionine 1 to alanine 19. N-linked (GlcNAc...) asparagine glycosylation is present at asparagine 136. Histidine 185 serves as a coordination point for Zn(2+). Residue glutamate 186 is part of the active site. Histidine 189 serves as a coordination point for Zn(2+). A glycan (N-linked (GlcNAc...) asparagine) is linked at asparagine 200. Cysteines 222 and 248 form a disulfide.

Belongs to the peptidase M43B family.

It localises to the secreted. In terms of biological role, secreted metalloproteinase that allows assimilation of proteinaceous substrates. Plays a pivotal role as a pathogenicity determinant during infections and contributes to the ability of the pathogen to persist within the mammalian host. This chain is Extracellular metalloprotease ARB_05317, found in Arthroderma benhamiae (strain ATCC MYA-4681 / CBS 112371) (Trichophyton mentagrophytes).